Reading from the N-terminus, the 268-residue chain is MMAAAGLESAWEYLITHFSEFQLASIGTFLLHESVFFLSGLPSLLFERLGLFSKYKIQKKSNTPDYQNRCVVRLVLYHVCVNLPLTILSYRTFKFMGLRSTLPLPHWTVVVSQVLFFFVLEDFIFYWGHRALHTKWLYQHVHSVHHEYATPFGLTSEYAHPAEILFLGFATVAGPALTGPHLFTLWVWMVLRVLETVEAHSGYHFPWSPSNFLPLYGGAEFHDYHHRVLYTKSGNYSSTFIYMDWLFGTDKDYRKTKALEEKERTKHL.

4 helical membrane-spanning segments follow: residues 26–46 (IGTF…SLLF), 70–90 (CVVR…ILSY), 107–127 (WTVV…IFYW), and 164–184 (ILFL…HLFT). In terms of domain architecture, Fatty acid hydroxylase spans 114 to 249 (VLFFFVLEDF…FIYMDWLFGT (136 aa)).

Belongs to the sterol desaturase family. Homodimer.

It is found in the endoplasmic reticulum membrane. The enzyme catalyses a long-chain fatty aldehyde + 2 NADPH + O2 + H(+) = a long-chain alkane + formate + 2 NADP(+) + H2O. In terms of biological role, aldehyde decarbonylase involved in the conversion of aldehydes to alkanes. Core component of a very-long-chain alkane synthesis complex. In Oryza sativa subsp. indica (Rice), this protein is Very-long-chain aldehyde decarbonylase GL1-8.